Reading from the N-terminus, the 260-residue chain is Late transcription factor 1 (260 aa).

This sequence belongs to the chordopoxvirinae VLTF-1 family. Interacts with the late transcription factors VLTF-2 and VLTF-3. Interacts with the late transcription elongation factor VLTF-4. Interacts with itself.

In terms of biological role, associates with RNA polymerase to initiate transcription from late gene promoters. This chain is Late transcription factor 1 (OPG093), found in Homo sapiens (Human).